The chain runs to 592 residues: MIDLSTMKQQIATLLNQAIERLKTKGVLKPEVTPVIKITHTTDPQHGDFATNLALTLSKAAGMSPHALAEKIVEALPPSGQITEVEIAGPGFINFFVTEGSYQTIVSSILKAGKDYGRSEMGKGQRVHMEYVSANPTGPLHVGHGRGAAYGACVANLLNAAGFEVHREYYVNDAGRQMGILALSVWIRYLQGYEASIELPKNAYQGEYIIDIAEALKAKYGKQFYHSVESIQAKIPEEIDSNADPEAYLDAWVTAQKDLLGPKDFECVFQAALDSILNDIKNDLEEFGVTYDDWFPESRLVREGLIQEGLDLLTKHGYVYEKNGAQWFRATALGDEKDRVLIRKNGLPTYFAADVAYHLHKFNQGYDQIIDIFGADHHGYIPRIRGFLKGLGKAPEKLHILLVQFAILYRGNEKVSMSTRGGTFVTLRELRHEVGNDAARFFYIMRKPDQHLDFDLELAKSQSNENPVYYIQYAHARICSVFRQLKTTQKNWDRPRGMENLSLLSTNYEKELLATLGRYPEVIKRAAMNYAPHLLAHYLQTLANQFHTYYNAERFLIEDDNLRNARLNLINAVQQIIRNGLTLLGVSAPEEM.

The 'HIGH' region signature appears at alanine 134–histidine 144.

This sequence belongs to the class-I aminoacyl-tRNA synthetase family. Monomer.

The protein resides in the cytoplasm. The catalysed reaction is tRNA(Arg) + L-arginine + ATP = L-arginyl-tRNA(Arg) + AMP + diphosphate. This is Arginine--tRNA ligase from Coxiella burnetii (strain CbuG_Q212) (Coxiella burnetii (strain Q212)).